The chain runs to 602 residues: Serine/threonine-protein phosphatase 2A 56 kDa regulatory subunit delta isoform (602 aa).

Over residues 1–13 the composition is skewed to basic and acidic residues; sequence MPYKLKKEKEPPK. Residues 1-96 form a disordered region; it reads MPYKLKKEKE…QSSSRFNLSK (96 aa). Repeat copies occupy residues 37–38, 39–40, 41–42, 43–44, and 45–46. An 8 X 2 AA approximate tandem repeats of Q-P region spans residues 37-52; that stretch reads QPQPQPQPQPQAQSQP. The segment covering 46–55 has biased composition (low complexity); sequence PQAQSQPPSS. The 6; approximate repeat unit spans residues 47–48; it reads QA. Residues 49-50 form a 7; approximate repeat; sequence QS. The stretch at 51–52 is repeat 8; it reads QP. T63 bears the Phosphothreonine mark. Phosphoserine is present on residues S88, S89, and S90. An SH3-binding; class I motif is present at residues 523–530; that stretch reads RAPPPLPP. The Nuclear localization signal signature appears at 548–565; it reads KRTVETEAVQMLKDIKKE. A phosphoserine mark is found at S573 and S598.

It belongs to the phosphatase 2A regulatory subunit B56 family. In terms of assembly, PP2A consists of a common heterodimeric core enzyme, composed of a 36 kDa catalytic subunit (subunit C) and a 65 kDa constant regulatory subunit (PR65 or subunit A), that associates with a variety of regulatory subunits. Proteins that associate with the core dimer include three families of regulatory subunits B (the R2/B/PR55/B55, R3/B''/PR72/PR130/PR59 and R5/B'/B56 families), the 48 kDa variable regulatory subunit, viral proteins, and cell signaling molecules. Interacts with the PP2A A subunit PPP2R1A. Interacts with SGO1. Interacts with ADCY8. As to expression, isoform Delta-2 is widely expressed. Isoform Delta-1 is highly expressed in brain.

The protein resides in the cytoplasm. The protein localises to the nucleus. Its function is as follows. The B regulatory subunit might modulate substrate selectivity and catalytic activity, and might also direct the localization of the catalytic enzyme to a particular subcellular compartment. The protein is Serine/threonine-protein phosphatase 2A 56 kDa regulatory subunit delta isoform (PPP2R5D) of Homo sapiens (Human).